The sequence spans 365 residues: DNA replication and repair protein RecF (365 aa).

Position 30-37 (30-37 (GDNGEGKT)) interacts with ATP.

The protein belongs to the RecF family.

It is found in the cytoplasm. Its function is as follows. The RecF protein is involved in DNA metabolism; it is required for DNA replication and normal SOS inducibility. RecF binds preferentially to single-stranded, linear DNA. It also seems to bind ATP. The polypeptide is DNA replication and repair protein RecF (Leptospira borgpetersenii serovar Hardjo-bovis (strain JB197)).